The chain runs to 161 residues: V-type proton ATPase 16 kDa proteolipid subunit c (161 aa).

At 1–15 (MSYDLATAERAAYAP) the chain is on the lumenal side. Residues 16–36 (FFGYMGAASAQIFTVLGAAYG) traverse the membrane as a helical segment. Over 37 to 58 (TAKSAVGISSMGVMRPELIMKS) the chain is Cytoplasmic. Residues 59 to 79 (VIPVIMAGIIGIYGLVVAMVL) traverse the membrane as a helical segment. The Lumenal portion of the chain corresponds to 80–98 (RGKVTSASAGYTLDKGFAH). Residues 99–119 (LAAGLTCGLCGLGAGYAIGIV) form a helical membrane-spanning segment. The Cytoplasmic segment spans residues 120 to 137 (GDAGVRGTAQQPRLFVGM). The helical transmembrane segment at 138 to 158 (ILILIFSEVLGLYGMIVALIL) threads the bilayer. The Lumenal portion of the chain corresponds to 159 to 161 (GTS).

This sequence belongs to the V-ATPase proteolipid subunit family. V-ATPase is a heteromultimeric enzyme made up of two complexes: the ATP-hydrolytic V1 complex and the proton translocation V0 complex. The V1 complex consists of three catalytic AB heterodimers that form a heterohexamer, three peripheral stalks each consisting of EG heterodimers, one central rotor including subunits D and F, and the regulatory subunits C and H. The proton translocation complex V0 consists of the proton transport subunit a, a ring of proteolipid subunits c9c'', rotary subunit d, subunits e and f, and the accessory subunits vah-19/Ac45 and vah-20/PRR.

The protein localises to the membrane. Proton-conducting pore forming subunit of the V0 complex of vacuolar(H+)-ATPase (V-ATPase), a multisubunit enzyme composed of a peripheral complex (V1) that hydrolyzes ATP and a membrane integral complex (V0) that translocates protons. V-ATPase is responsible for acidifying and maintaining the pH of intracellular compartments and in some cell types, is targeted to the plasma membrane, where it is responsible for acidifying the extracellular environment. In Ascaris suum (Pig roundworm), this protein is V-type proton ATPase 16 kDa proteolipid subunit c (12).